A 172-amino-acid polypeptide reads, in one-letter code: UPF0316 protein Clos_0555 (172 aa).

Helical transmembrane passes span alanine 3–isoleucine 23, valine 34–valine 54, and proline 61–leucine 81.

The protein belongs to the UPF0316 family.

It is found in the cell membrane. This chain is UPF0316 protein Clos_0555, found in Alkaliphilus oremlandii (strain OhILAs) (Clostridium oremlandii (strain OhILAs)).